The primary structure comprises 250 residues: 1-(5-phosphoribosyl)-5-[(5-phosphoribosylamino)methylideneamino] imidazole-4-carboxamide isomerase (250 aa).

Asp12 acts as the Proton acceptor in catalysis. The Proton donor role is filled by Asp134.

This sequence belongs to the HisA/HisF family.

It is found in the cytoplasm. The catalysed reaction is 1-(5-phospho-beta-D-ribosyl)-5-[(5-phospho-beta-D-ribosylamino)methylideneamino]imidazole-4-carboxamide = 5-[(5-phospho-1-deoxy-D-ribulos-1-ylimino)methylamino]-1-(5-phospho-beta-D-ribosyl)imidazole-4-carboxamide. The protein operates within amino-acid biosynthesis; L-histidine biosynthesis; L-histidine from 5-phospho-alpha-D-ribose 1-diphosphate: step 4/9. The polypeptide is 1-(5-phosphoribosyl)-5-[(5-phosphoribosylamino)methylideneamino] imidazole-4-carboxamide isomerase (Actinobacillus pleuropneumoniae serotype 5b (strain L20)).